Here is a 202-residue protein sequence, read N- to C-terminus: Coiled-coil domain-containing protein 69 (202 aa).

A compositionally biased stretch (basic residues) spans 1 to 11; it reads MGCRQSRHSRG. Disordered regions lie at residues 1–20 and 32–52; these read MGCRQSRHSRGKRAEKVEET and GRILEGRHEEAGQVPQTSNAQ. Gly-2 carries N-myristoyl glycine lipidation. Positions 32-42 are enriched in basic and acidic residues; that stretch reads GRILEGRHEEA. Position 92 is a phosphoserine (Ser-92). A coiled-coil region spans residues 112–146; that stretch reads WEQELESLHHVIEMKNERIHELEKQLFLLEMLKEK.

It belongs to the CCDC69 family.

The protein resides in the cytoplasm. It is found in the cytoskeleton. The protein localises to the spindle. It localises to the midbody. Functionally, may act as a scaffold to regulate the recruitment and assembly of spindle midzone components. Required for the localization of AURKB and PLK1 to the spindle midzone. This Mus musculus (Mouse) protein is Coiled-coil domain-containing protein 69 (Ccdc69).